The sequence spans 152 residues: UPF0266 membrane protein YobD (152 aa).

3 consecutive transmembrane segments (helical) span residues 6-26 (LVLILFIAALLAYALYDQFIM), 45-65 (VDSVIFVGLVAILIYNNVTSH), and 67-87 (AQMTTWLLSALALMGFYIFWI).

Belongs to the UPF0266 family.

Its subcellular location is the cell inner membrane. The polypeptide is UPF0266 membrane protein YobD (Salmonella agona (strain SL483)).